We begin with the raw amino-acid sequence, 419 residues long: Subtilisin-like protease 2 (419 aa).

Residues 1–16 form the signal peptide; the sequence is MQLLNFGLLLLPFVAG. The propeptide occupies 17 to 122; the sequence is DLAPQPEPLL…VHPDQHVYLA (106 aa). The region spanning 36-122 is the Inhibitor I9 domain; the sequence is QYIVTLKEGL…VHPDQHVYLA (87 aa). One can recognise a Peptidase S8 domain in the interval 131–419; that stretch reads RWGLGYMSSK…IQERKFKLPK (289 aa). Residues D169 and H201 each act as charge relay system in the active site. N248, N261, and N348 each carry an N-linked (GlcNAc...) asparagine glycan. S357 functions as the Charge relay system in the catalytic mechanism. A glycan (N-linked (GlcNAc...) asparagine) is linked at N388.

The protein belongs to the peptidase S8 family.

Its subcellular location is the secreted. Secreted subtilisin-like serine protease with keratinolytic activity that contributes to pathogenicity. This is Subtilisin-like protease 2 (SUB2) from Trichophyton verrucosum (Cattle ringworm fungus).